The following is a 252-amino-acid chain: Adenosylcobinamide-GDP ribazoletransferase (252 aa).

A run of 5 helical transmembrane segments spans residues 33–53, 105–125, 132–152, 184–204, and 215–235; these read FISP…VVLL, TGSG…IATL, LWFF…LLGL, FAIL…LLVF, and MSGD…LLVA.

The protein belongs to the CobS family. The cofactor is Mg(2+).

The protein resides in the cell membrane. The catalysed reaction is alpha-ribazole + adenosylcob(III)inamide-GDP = adenosylcob(III)alamin + GMP + H(+). The enzyme catalyses alpha-ribazole 5'-phosphate + adenosylcob(III)inamide-GDP = adenosylcob(III)alamin 5'-phosphate + GMP + H(+). It functions in the pathway cofactor biosynthesis; adenosylcobalamin biosynthesis; adenosylcobalamin from cob(II)yrinate a,c-diamide: step 7/7. Functionally, joins adenosylcobinamide-GDP and alpha-ribazole to generate adenosylcobalamin (Ado-cobalamin). Also synthesizes adenosylcobalamin 5'-phosphate from adenosylcobinamide-GDP and alpha-ribazole 5'-phosphate. The chain is Adenosylcobinamide-GDP ribazoletransferase from Sulfolobus acidocaldarius (strain ATCC 33909 / DSM 639 / JCM 8929 / NBRC 15157 / NCIMB 11770).